The following is an 826-amino-acid chain: Protein lozenge (826 aa).

Disordered stretches follow at residues 1 to 45, 87 to 171, and 214 to 263; these read MHLH…ASQT, PVSV…WSSS, and ASVG…NNNN. Residues 12–24 show a composition bias toward pro residues; sequence PPSPSPNPTPTPS. Residues 106–141 show a composition bias toward basic residues; it reads SHHHHHLHHHYSPYHHAHPYHPPHPHAPHHHHHHHP. Pro residues predominate over residues 142–153; that stretch reads PYPYPPAGPHPP. Polar residues predominate over residues 156–171; sequence VTSSSTSPTGNGWSSS. The 129-residue stretch at 275-403 folds into the Runt domain; sequence LVQKRQQEHP…TVDGPREPRS (129 aa). The segment covering 774–798 has biased composition (low complexity); that stretch reads QQQQQQQQQQQQVHHPQQQQVESAG. The interval 774–826 is disordered; sequence QQQQQQQQQQQQVHHPQQQQVESAGEVGGSGAGGVESAREEDVGDLSQVWRPY.

As to expression, expressed in the pupal eye during programmed cell death.

The protein localises to the nucleus. Involved in prepatterning photoreceptor precursors in the developing eye; in the larval eye disk it defines a subset of cells as an equipotential group that is competent to respond to the sevenless developmental signal and another subset that confer proper photoreceptor identity by positively regulating the homeo box gene Bar. Involved in the aop/pnt dynamic in a Ras-dependent manner to regulate pros expression. Promotes apoptosis in the pupal eye by directly activating aos and klu. Also modulates hid- and rpr-mediated cell death. Regulates amos function in olfactory sensilla development. In Drosophila melanogaster (Fruit fly), this protein is Protein lozenge (lz).